We begin with the raw amino-acid sequence, 115 residues long: Protamine-2 (115 aa).

Positions Met1–Leu115 are disordered. Position 8 is a phosphoserine (Ser8). The segment covering Glu24 to Asp38 has biased composition (basic and acidic residues). 2 stretches are compositionally biased toward basic residues: residues Arg44–Gly79 and Arg102–Leu115.

This sequence belongs to the protamine P2 family. As to quaternary structure, interacts with TDRP. In terms of processing, proteolytic processing into mature chains is required for histone eviction during spermatogenesis. Transition proteins (TNP1 and TNP2) are required for processing. Testis.

The protein localises to the nucleus. The protein resides in the chromosome. Its function is as follows. Protamines substitute for histones in the chromatin of sperm during the haploid phase of spermatogenesis. They compact sperm DNA into a highly condensed, stable and inactive complex. This Bos taurus (Bovine) protein is Protamine-2 (PRM2).